The primary structure comprises 348 residues: Nicotinate-nucleotide--dimethylbenzimidazole phosphoribosyltransferase (348 aa).

The Proton acceptor role is filled by Glu-316.

The protein belongs to the CobT family.

It carries out the reaction 5,6-dimethylbenzimidazole + nicotinate beta-D-ribonucleotide = alpha-ribazole 5'-phosphate + nicotinate + H(+). Its pathway is nucleoside biosynthesis; alpha-ribazole biosynthesis; alpha-ribazole from 5,6-dimethylbenzimidazole: step 1/2. Functionally, catalyzes the synthesis of alpha-ribazole-5'-phosphate from nicotinate mononucleotide (NAMN) and 5,6-dimethylbenzimidazole (DMB). The chain is Nicotinate-nucleotide--dimethylbenzimidazole phosphoribosyltransferase from Xanthomonas axonopodis pv. citri (strain 306).